The chain runs to 176 residues: Peptidyl-prolyl cis-trans isomerase CYP19-3 (176 aa).

Residues 7 to 170 (FFDILIGKMK…ERVVIEDCGE (164 aa)) enclose the PPIase cyclophilin-type domain.

Belongs to the cyclophilin-type PPIase family. Ubiquitous, with highest levels in flowers and lowest levels in roots.

The protein localises to the cytoplasm. It carries out the reaction [protein]-peptidylproline (omega=180) = [protein]-peptidylproline (omega=0). Binds cyclosporin A (CsA). CsA mediates some of its effects via an inhibitory action on PPIase. In terms of biological role, PPIases accelerate the folding of proteins. It catalyzes the cis-trans isomerization of proline imidic peptide bonds in oligopeptides. The protein is Peptidyl-prolyl cis-trans isomerase CYP19-3 (CYP19-3) of Arabidopsis thaliana (Mouse-ear cress).